A 486-amino-acid polypeptide reads, in one-letter code: Transcription factor aptf-4 (486 aa).

Disordered regions lie at residues 25 to 49 (CEPS…SAKM) and 150 to 173 (LSTT…NQEK). Residues 150–169 (LSTTSANFTPDWNTTTNGPC) are compositionally biased toward polar residues. Residues 301 to 430 (QRQRKVTCFS…IVEQAALYCE (130 aa)) are H-S-H (helix-span-helix), dimerization.

This sequence belongs to the AP-2 family. Binds DNA as a dimer.

The protein resides in the nucleus. Functionally, sequence-specific DNA-binding protein that interacts with enhancer elements to regulate transcription of selected genes. Required for neuroblast and epidermal morphogenesis, perhaps acting in cooperation with transcription factor aptf-2. This chain is Transcription factor aptf-4, found in Caenorhabditis elegans.